The primary structure comprises 220 residues: Probable metallo-hydrolase YybB (220 aa).

Zn(2+)-binding residues include H67, H69, D71, H72, H139, D158, and H200.

Belongs to the metallo-beta-lactamase superfamily. Requires Zn(2+) as cofactor.

The protein is Probable metallo-hydrolase YybB (yybB) of Bacillus subtilis (strain 168).